A 207-amino-acid polypeptide reads, in one-letter code: Urease accessory protein UreG (207 aa).

Position 14–21 (14–21) interacts with GTP; sequence GPVGSGKT.

Belongs to the SIMIBI class G3E GTPase family. UreG subfamily. Homodimer. UreD, UreF and UreG form a complex that acts as a GTP-hydrolysis-dependent molecular chaperone, activating the urease apoprotein by helping to assemble the nickel containing metallocenter of UreC. The UreE protein probably delivers the nickel.

Its subcellular location is the cytoplasm. In terms of biological role, facilitates the functional incorporation of the urease nickel metallocenter. This process requires GTP hydrolysis, probably effectuated by UreG. The sequence is that of Urease accessory protein UreG from Tolumonas auensis (strain DSM 9187 / NBRC 110442 / TA 4).